Consider the following 210-residue polypeptide: Ras-related protein Rab-8 (210 aa).

15 to 22 (GDSGVGKT) is a binding site for GTP. The Effector region signature appears at 37 to 45 (FISTIGIDF). Residues 63 to 67 (DTAGQ) and 121 to 124 (NKCD) contribute to the GTP site. Position 207 is a cysteine methyl ester (C207). C207 is lipidated: S-geranylgeranyl cysteine. A propeptide spans 208–210 (SLL) (removed in mature form).

This sequence belongs to the small GTPase superfamily. Rab family.

It localises to the cell membrane. The protein is Ras-related protein Rab-8 of Diplobatis ommata (Ocellated electric ray).